Reading from the N-terminus, the 454-residue chain is Pyrrolysine--tRNA ligase (454 aa).

The interval 102–138 is disordered; that stretch reads TRTKKAMPKSVARAPKPLENTEAAQAQPSGSKFSPAI. Residues 123–133 show a composition bias toward polar residues; that stretch reads EAAQAQPSGSK.

This sequence belongs to the class-II aminoacyl-tRNA synthetase family.

Its subcellular location is the cytoplasm. It catalyses the reaction tRNA(Pyl) + L-pyrrolysine + ATP = L-pyrrolysyl-tRNA(Pyl) + AMP + diphosphate. Functionally, catalyzes the attachment of pyrrolysine to tRNA(Pyl). Pyrrolysine is a lysine derivative encoded by the termination codon UAG. The protein is Pyrrolysine--tRNA ligase of Methanosarcina mazei (strain ATCC BAA-159 / DSM 3647 / Goe1 / Go1 / JCM 11833 / OCM 88) (Methanosarcina frisia).